The sequence spans 427 residues: MSRSEALFAQAQKHIPGGVNSPVRAFKSVGGTPLFFKHAEGAYVVDEDDKRYVDYVGSWGPMILGHGHPDVLDSVRKQLEHGLSYGAPTAMETEMADLVCSIVPSMEMVRMVSSGTEATMSAIRLARGYTGRDAIIKFEGCYHGHSDSLLVKAGSGLLTQGVPSSAGVPADFAKHTLTLPFNDIAAVEKTLAEVGQTVACIIVEPVAGNMNCVPPAPGFLEGLREQCDKHGVVLIFDEVMTGFRVSLGGAQGHYGITPDLSTFGKIVGGGMPVGCFGGKREIMGCIAPLGPVYQAGTLSGNPLAMAAGLTTLKLISRPGFHAELTDYTSRMLDGLQQRADAAGVPFVTTQAGAMFGLYFSGADDIVTFEDVMASDAERFKRFFHLMLDGGVYLAPSAFEAGFTSIAHGDKELQITLDAAEKAFAALK.

The residue at position 265 (Lys265) is an N6-(pyridoxal phosphate)lysine.

This sequence belongs to the class-III pyridoxal-phosphate-dependent aminotransferase family. HemL subfamily. In terms of assembly, homodimer. Pyridoxal 5'-phosphate serves as cofactor.

It localises to the cytoplasm. It carries out the reaction (S)-4-amino-5-oxopentanoate = 5-aminolevulinate. Its pathway is porphyrin-containing compound metabolism; protoporphyrin-IX biosynthesis; 5-aminolevulinate from L-glutamyl-tRNA(Glu): step 2/2. This chain is Glutamate-1-semialdehyde 2,1-aminomutase, found in Pseudomonas putida (strain ATCC 700007 / DSM 6899 / JCM 31910 / BCRC 17059 / LMG 24140 / F1).